The sequence spans 598 residues: Elongation factor 4 (598 aa).

The tr-type G domain maps to 4-186; that stretch reads INIRNFAIIA…AIVSRLPAPS (183 aa). GTP-binding positions include 16–21 and 133–136; these read DHGKST and NKID.

This sequence belongs to the TRAFAC class translation factor GTPase superfamily. Classic translation factor GTPase family. LepA subfamily.

The protein resides in the cell inner membrane. The catalysed reaction is GTP + H2O = GDP + phosphate + H(+). Its function is as follows. Required for accurate and efficient protein synthesis under certain stress conditions. May act as a fidelity factor of the translation reaction, by catalyzing a one-codon backward translocation of tRNAs on improperly translocated ribosomes. Back-translocation proceeds from a post-translocation (POST) complex to a pre-translocation (PRE) complex, thus giving elongation factor G a second chance to translocate the tRNAs correctly. Binds to ribosomes in a GTP-dependent manner. In Ehrlichia ruminantium (strain Welgevonden), this protein is Elongation factor 4.